The sequence spans 177 residues: Large ribosomal subunit protein uL6 (177 aa).

Belongs to the universal ribosomal protein uL6 family. As to quaternary structure, part of the 50S ribosomal subunit.

This protein binds to the 23S rRNA, and is important in its secondary structure. It is located near the subunit interface in the base of the L7/L12 stalk, and near the tRNA binding site of the peptidyltransferase center. The polypeptide is Large ribosomal subunit protein uL6 (Vibrio campbellii (strain ATCC BAA-1116)).